The chain runs to 118 residues: Myotrophin (118 aa).

The residue at position 2 (cysteine 2) is an N-acetylcysteine. One copy of the ANK 1 repeat lies at 2-30; sequence CDKEFMWALKNGDLDEVKDYVAKGEDVNR. An N6-acetyllysine mark is found at lysine 4, lysine 11, and lysine 24. Threonine 31 is modified (phosphothreonine). ANK repeat units follow at residues 34–66 and 67–99; these read GGRK…APDK and HHIT…VKGP.

The protein belongs to the myotrophin family. As to quaternary structure, interacts with the heterodimer formed by CAPZA1 and CAPZB. Interacts with RELA.

It is found in the cytoplasm. It localises to the nucleus. The protein resides in the perinuclear region. In terms of biological role, plays a role in the regulation of the growth of actin filaments. Inhibits the activity of the F-actin-capping protein complex formed by the CAPZA1 and CAPZB heterodimer. Promotes dimerization of NF-kappa-B subunits and regulates NF-kappa-B transcription factor activity. Promotes growth of cardiomyocytes, but not cardiomyocyte proliferation. Promotes cardiac muscle hypertrophy. This chain is Myotrophin (Mtpn), found in Rattus norvegicus (Rat).